The following is a 160-amino-acid chain: Eosinophil cationic protein (160 aa).

Residues 1–27 (MVPKLFTSQICLLLLLGLMGVEGSLHA) form the signal peptide. The tract at residues 28–72 (RPPQFTRAQWFAIQHISLNPPRCTIAMRAINNYRWRCKNQNTFLR) is required for nearly all of the bactericidal activity; partially involved in LPS-binding and bacterial membrane depolarization. The Proton acceptor role is filled by H42. 4 disulfide bridges follow: C50/C110, C64/C123, C82/C138, and C89/C98. Y60 is modified (3'-nitrotyrosine). Position 65–69 (65–69 (KNQNT)) interacts with substrate. Residues N84, N92, and N119 are each glycosylated (N-linked (GlcNAc...) asparagine). Catalysis depends on H155, which acts as the Proton donor.

This sequence belongs to the pancreatic ribonuclease family. As to quaternary structure, interacts with bacterial lipopolysaccharide (LPS) and lipoteichoic acid (LTA). In vitro interacts with and insert into lipid bilayers composed of dioleoyl phosphatidylcholine and dioleoyl phosphatidylglycerol. In vitro, tends to form amyloid-like aggregates at pH 3, but not at pH 5, nor 7.

It localises to the secreted. Functionally, cytotoxin and helminthotoxin with low-efficiency ribonuclease activity. Possesses a wide variety of biological activities. Exhibits antibacterial activity, including cytoplasmic membrane depolarization of preferentially Gram-negative, but also Gram-positive strains. Promotes E.coli outer membrane detachment, alteration of the overall cell shape and partial loss of cell content. The protein is Eosinophil cationic protein (RNASE3) of Homo sapiens (Human).